Consider the following 370-residue polypeptide: Uroporphyrinogen decarboxylase (370 aa).

Substrate is bound by residues 29 to 33 (RQAGR), aspartate 79, tyrosine 155, serine 210, and histidine 342.

It belongs to the uroporphyrinogen decarboxylase family. In terms of assembly, homodimer.

Its subcellular location is the cytoplasm. It carries out the reaction uroporphyrinogen III + 4 H(+) = coproporphyrinogen III + 4 CO2. It functions in the pathway porphyrin-containing compound metabolism; protoporphyrin-IX biosynthesis; coproporphyrinogen-III from 5-aminolevulinate: step 4/4. In terms of biological role, catalyzes the decarboxylation of four acetate groups of uroporphyrinogen-III to yield coproporphyrinogen-III. This chain is Uroporphyrinogen decarboxylase, found in Acidovorax sp. (strain JS42).